The chain runs to 143 residues: Beta/delta-urticatoxin-Uf2b (143 aa).

An N-terminal signal peptide occupies residues 1–18 (MGAIVLVALMALVASSSA). Residues 19 to 80 (FSDIEHNIMK…MMLSGRPQPN (62 aa)) constitute a propeptide that is removed on maturation. Disulfide bonds link C83-C100, C90-C105, C99-C113, C115-C129, C122-C134, and C128-C142.

It belongs to the urticatoxin-2 family. Expressed in trichomes, that are stiff epidermal hairs located on the surface of petioles and leaves.

It localises to the secreted. Plant defense neurotoxin that causes pain and systemic symptoms in mammals via modulation of voltage-gated sodium channels (Nav). Potent modulator of human Nav1.5/SCN5A (EC(50)=55 nM), Nav1.6/SCN8A (EC(50)=0.86 nM), and Nav1.7/SCN9A (EC(50)=208 nM), where it shifts the activation threshold to more negative potentials and delays fast inactivation. Also shifts the voltage-dependence of steady-state fast inactivation of Nav1.6/SCN8A, but not that of Nav1.5/SCN5A or Nav1.7/SCN9A. On Nav1.7/SCN9A, principally acts by binding to extracellular loops of domain IV (Nav site 3). In vivo, intraplantar injection into mice causes numerous dose-dependent, immediate, and long-lasting spontaneous pain behaviors, while no swelling is observed in the injected paw. At the highest doses tested, systemic symptoms including hypokinesia and hypersalivation are observed. The sequence is that of Beta/delta-urticatoxin-Uf2b from Urtica ferox (Tree nettle).